Consider the following 87-residue polypeptide: MENDKGQLVELYVPRKCSATNRIIKAKDHGSVQINIAQVDENGHAVPGEYITYALSGYVRARGEADDSMNRLAQKDGLLKNVWSYSR.

The protein belongs to the eukaryotic ribosomal protein eS21 family. In terms of assembly, component of the small ribosomal subunit. Mature ribosomes consist of a small (40S) and a large (60S) subunit. The 40S subunit contains about 33 different proteins and 1 molecule of RNA (18S). The 60S subunit contains about 49 different proteins and 3 molecules of RNA (25S, 5.8S and 5S).

Its subcellular location is the cytoplasm. Required for the processing of the 20S rRNA-precursor to mature 18S rRNA in a late step of the maturation of 40S ribosomal subunits. Has a physiological role leading to 18S rRNA stability. This Eremothecium gossypii (strain ATCC 10895 / CBS 109.51 / FGSC 9923 / NRRL Y-1056) (Yeast) protein is Small ribosomal subunit protein eS21 (RPS21).